A 784-amino-acid chain; its full sequence is Ent-kaurene synthase 1, chloroplastic (784 aa).

The transit peptide at 1–28 (MNLSLCIASPLLTKSSRPTALSAIHTAS) directs the protein to the chloroplast. Mg(2+)-binding residues include D528, D532, N672, and E680. The DDXXD motif motif lies at 528-532 (DDFFD).

It belongs to the terpene synthase family. Mg(2+) is required as a cofactor. In terms of tissue distribution, accumulates in leaves.

It localises to the plastid. The protein localises to the chloroplast. The catalysed reaction is ent-copalyl diphosphate = ent-kaur-16-ene + diphosphate. The protein operates within secondary metabolite biosynthesis; terpenoid biosynthesis. Its pathway is plant hormone biosynthesis; gibberellin biosynthesis. Involved in the biosynthesis of ent-kaurene diterpenoids natural products such as oridonin, miltiradiene, eriocalyxin B and nezukol, known to exhibit antitumor, anti-inflammatory and antibacterial activities, and in the production of gibberellins phytohormones. Catalyzes the conversion of ent-copalyl diphosphate (ent-CPP) to ent-kaurene. The sequence is that of Ent-kaurene synthase 1, chloroplastic from Stevia rebaudiana (Stevia).